Consider the following 285-residue polypeptide: Transcription initiation factor IIE subunit beta (285 aa).

Composition is skewed to polar residues over residues 1-10 (MSSLSDQLSS) and 33-44 (TPTAYLNSNDGH). The tract at residues 1 to 56 (MSSLSDQLSSFKKKVANQPIYAKPQPRQPASPTPTAYLNSNDGHSSAASSPGSYSL) is disordered. The segment covering 45–55 (SSAASSPGSYS) has biased composition (low complexity). The segment at residues 67–142 (YSQPADSGVG…FTFKPLHNIR (76 aa)) is a DNA-binding region (TFIIE beta). Positions 240-272 (PTSVDPSTVKRAGHNQTPKQKKPKTRRGKITNT) are disordered. A compositionally biased stretch (basic residues) spans 258–268 (KQKKPKTRRGK).

The protein belongs to the TFIIE beta subunit family. TFIIE is a tetramer of two alpha (tfa1) and two beta (tfa2) subunits. TFIIE associates with RNA polymerase II via the beta subunit.

It localises to the nucleus. In terms of biological role, recruits TFIIH to the initiation complex and stimulates the RNA polymerase II C-terminal domain kinase and DNA-dependent ATPase activities of TFIIH. Both TFIIH and TFIIE are required for promoter clearance by RNA polymerase. This Schizosaccharomyces pombe (strain 972 / ATCC 24843) (Fission yeast) protein is Transcription initiation factor IIE subunit beta (tfa2).